The following is a 555-amino-acid chain: MAQCNLFYQYPITPILEGHVRNILICTEKDVEKLQSQSSLRLREKIDQGHRDKLLRMRLKTELDALQKKMQKDSDVLNSHLKAIEDALLFTNDGEVNVETKADAQLIPKSPEKLEKFNQVAITPLDPFIRFTDDFRGEMINTFFNNAQMWNFTFGSWFYKLKRVFYNEPGLRRALKLTNVDSLTISKELLAVTVNALEQATVYPIFGSEMSDLEAALCILAAFYSTYENSQIDERTTLVDVITLLPVIFRLLGSEITALKNVSPSGTYFGFNDPSCMKFFVPMRKGKHYAENTFGNHVLIKMLLGRGVMQKIPGEKISQNFDVEARLHGAIKNDVLVYWTYQLMRPKLGNNVPIFIHDQHYLRSGLVAIESLFLLWRILNSESLFNKRVGKFLLTSIFPQLENVDFAENNFEAGNIQNFEYLMHHYVVPMYNLQNDISISTLFPGLVAVCVNESVRLGWEHKCAGAPSDAVQVQSKENPFVEYIRAQMEQQADVAILEKHDCILFHLENGLNITLSFTLPRQRLFAMASSLFNVNDTYDFIYFLVLGFLPIPAVI.

Residues 1 to 47 are interaction with major capsid protein/MCP; it reads MAQCNLFYQYPITPILEGHVRNILICTEKDVEKLQSQSSLRLREKID.

It belongs to the herpesviridae CVC2 protein family. As to quaternary structure, heterodimerizes with CVC1. Interacts with major capsid protein/MCP and triplex capsid protein 1/TRX1 at the pentamer vertices. Interacts with the large tegument protein/LTP.

It is found in the virion. Its subcellular location is the host nucleus. Capsid vertex-specific component that plays a role during viral DNA encapsidation, assuring correct genome cleavage and presumably stabilizing capsids that contain full-length viral genomes. Participates in the interaction between the capsid and the tegument through interaction with the large tegument protein/LTP. The chain is Capsid vertex component 2 from Homo sapiens (Human).